The sequence spans 163 residues: MEFYPIHILLSKLEEEIAFQQKMATTYLVSPPKYSPEVIGTVSETLRRISADLKLVSLILGELEEVQERDIKEEALILSSESLSLISLLLPAIEKYAPFFLESMKVERKPILEKLEDVMAEIENAIEKLELSSSREIIRSLEELAQSLEISLKMGERILERES.

Positions 101 to 162 form a coiled coil; the sequence is LESMKVERKP…KMGERILERE (62 aa).

This is an uncharacterized protein from Aquifex aeolicus (strain VF5).